The chain runs to 902 residues: MDTSKTSFFLFSVLCSLQLVGAARPGKQQRSCPTPCECEQEGMLVRVDCSDRALTSLPRNLSIFTSYLDLSMNNITNLPSNVMHNLHFLEELRLAGNDLTYIPKGAFAGLGSLKVLMLQNNLLRQVPSEALHNLRSLQSLRLDANHISYVPPSSFNGLFSLRHLWLDDNSLTEIPVRALESLSALQAMTLALNKIHHIPDYAFRNLSSLVVLHLHNNRIYSLGKKCFDGLHSLETLDLNYNNLDEFPAAIKTLKNLKELGFHSNNIKSIPEQAFIGNPSLITIHFYDNPIQHVGRSAFQHLPELRTLILNGASQITEFPDLTGTTSLESLTLTGAQLVYLPSAVCTQLPNLQVLDLSYNHIKDLPSFSGCQRLQKIDLRHNEVYEIRSTTFQQLVGLRSLDLAWNKIAVIHPNSFSSLPSLIKLDLSSNHLTSFPVTGLHGLTHLKLTGNSALQDLIPSEHFPKLRVMEMPYAYQCCAFAVCDNLKHSGQMNKDENSSADDFYRKDIGLLHLQDDRDFEDFLLDFEEDVKVLHSVQCTPSAGPFKPCDHLFGSWLTRTGVWLIVLLSFVCNALVIATVFRPLSYVPSIKLLIGLIAIMNTLMGLSSGVLATVDALTFGNFAQYGAWWESGVGCQITGFLSVFAAETSIFLLTVAALERGFSIKCTTKFETKSSFINVKLSIVFCFLLSIVIAVSPLLSGSTYGTSPLCFPLLFGDPSSMGFMVALVLLNSLCFLVMTIAYTKLYCSLEKGELENIWDCSMVKHIALLLFTNCILYCPVAFLSFSSLLNLTFISPEVNKSILLLIIPLPACLNPLLYILFNPHFKEDIGSLKNGDILWSRSRQTSLASVSSEDAEKQSCDSTQALVTFANSSISYDLPATSSSSSYQMTNNYKLSAVAFVPCH.

The first 22 residues, 1 to 22, serve as a signal peptide directing secretion; the sequence is MDTSKTSFFLFSVLCSLQLVGA. Residues 23–558 lie on the Extracellular side of the membrane; it reads ARPGKQQRSC…HLFGSWLTRT (536 aa). 2 disulfide bridges follow: Cys32–Cys38 and Cys36–Cys49. An LRRNT domain is found at 32–61; sequence CPTPCECEQEGMLVRVDCSDRALTSLPRNL. LRR repeat units follow at residues 41–61, 62–85, 86–109, 111–133, 134–157, 159–181, 182–205, 207–229, 230–253, 254–276, 278–300, 302–324, 325–347, 348–372, 374–393, 394–417, and 418–441; these read EGML…PRNL, SIFT…VMHN, LHFL…AFAG, GSLK…ALHN, LRSL…SFNG, FSLR…ALES, LSAL…AFRN, SSLV…CFDG, LHSL…IKTL, KNLK…AFIG, PSLI…AFQH, PELR…LTGT, TSLE…VCTQ, LPNL…GCQR, QKID…TFQQ, LVGL…SFSS, and LPSL…GLHG. Asn60 and Asn74 each carry an N-linked (GlcNAc...) asparagine glycan. N-linked (GlcNAc...) asparagine glycosylation occurs at Asn205. A disulfide bridge connects residues Cys345 and Cys370. Cysteines 476 and 537 form a disulfide. N-linked (GlcNAc...) asparagine glycosylation is present at Asn496. The chain crosses the membrane as a helical span at residues 559–579; sequence GVWLIVLLSFVCNALVIATVF. The Cytoplasmic portion of the chain corresponds to 580–589; it reads RPLSYVPSIK. A helical membrane pass occupies residues 590-610; that stretch reads LLIGLIAIMNTLMGLSSGVLA. An LRR 18 repeat occupies 598–619; it reads MNTLMGLSSGVLATVDALTFGN. Residues 611-634 are Extracellular-facing; that stretch reads TVDALTFGNFAQYGAWWESGVGCQ. Cys633 and Cys708 are joined by a disulfide. The helical transmembrane segment at 635–655 threads the bilayer; the sequence is ITGFLSVFAAETSIFLLTVAA. Topologically, residues 656–678 are cytoplasmic; it reads LERGFSIKCTTKFETKSSFINVK. Residues 679 to 699 form a helical membrane-spanning segment; it reads LSIVFCFLLSIVIAVSPLLSG. Topologically, residues 700–718 are extracellular; the sequence is STYGTSPLCFPLLFGDPSS. A helical transmembrane segment spans residues 719 to 739; sequence MGFMVALVLLNSLCFLVMTIA. At 740 to 763 the chain is on the cytoplasmic side; the sequence is YTKLYCSLEKGELENIWDCSMVKH. A helical transmembrane segment spans residues 764 to 784; that stretch reads IALLLFTNCILYCPVAFLSFS. Residues 785-798 are Extracellular-facing; sequence SLLNLTFISPEVNK. N-linked (GlcNAc...) asparagine glycosylation is found at Asn788 and Asn797. The chain crosses the membrane as a helical span at residues 799–819; it reads SILLLIIPLPACLNPLLYILF. The Cytoplasmic segment spans residues 820–902; that stretch reads NPHFKEDIGS…LSAVAFVPCH (83 aa).

This sequence belongs to the G-protein coupled receptor 1 family.

The protein localises to the cell membrane. Its subcellular location is the golgi apparatus. It localises to the trans-Golgi network membrane. Its function is as follows. Receptor for R-spondins that potentiates the canonical Wnt signaling pathway and acts as a stem cell marker of the intestinal epithelium and the hair follicle. Upon binding to R-spondins (RSPO1, RSPO2, RSPO3 or RSPO4), associates with phosphorylated LRP6 and frizzled receptors that are activated by extracellular Wnt receptors, triggering the canonical Wnt signaling pathway to increase expression of target genes. In contrast to classical G-protein coupled receptors, does not activate heterotrimeric G-proteins to transduce the signal. Involved in the development and/or maintenance of the adult intestinal stem cells during postembryonic development. The polypeptide is Leucine-rich repeat-containing G-protein coupled receptor 5 (lgr5) (Xenopus tropicalis (Western clawed frog)).